The sequence spans 236 residues: Predicted GPI-anchored protein 43 (236 aa).

An N-terminal signal peptide occupies residues 1-24; sequence MHQRNHHSILLTLLLYLQSIVALA. N-linked (GlcNAc...) asparagine glycosylation is found at asparagine 192, asparagine 195, and asparagine 198. The GPI-anchor amidated glycine moiety is linked to residue glycine 208. A propeptide spans 209 to 236 (removed in mature form); the sequence is SVCLTSSYLNSPIIILCAILTGTLFAMY.

It localises to the cell membrane. In Candida albicans (strain SC5314 / ATCC MYA-2876) (Yeast), this protein is Predicted GPI-anchored protein 43 (PGA43).